Reading from the N-terminus, the 780-residue chain is Oocyte zinc finger protein XlCOF8.4 (780 aa).

15 consecutive C2H2-type zinc fingers follow at residues 250–272, 278–300, 306–328, 334–356, 362–384, 390–412, 418–440, 446–468, 474–496, 618–640, 646–668, 674–696, 702–724, 730–752, and 758–780; these read FPCS…RRTH, FSCS…HRTH, FSCS…QKTH, YSCS…RRTH, YSCS…WKTH, FSCV…YRTH, FSCF…LKIH, LSCS…QKTH, FSCS…RRTH, YSCS…WRTH, FSCT…HRTH, and FSCS…FQLH.

Belongs to the krueppel C2H2-type zinc-finger protein family.

The protein localises to the nucleus. In terms of biological role, may be involved in transcriptional regulation. This is Oocyte zinc finger protein XlCOF8.4 from Xenopus laevis (African clawed frog).